A 151-amino-acid polypeptide reads, in one-letter code: Small ribosomal subunit protein uS13m (151 aa).

This sequence belongs to the universal ribosomal protein uS13 family. As to quaternary structure, component of the mitochondrial small ribosomal subunit (mt-SSU). Mature yeast 74S mitochondrial ribosomes consist of a small (37S) and a large (54S) subunit. The 37S small subunit contains a 15S ribosomal RNA (15S mt-rRNA) and at least 32 different proteins. The 54S large subunit contains a 21S rRNA (21S mt-rRNA) and at least 45 different proteins.

It is found in the mitochondrion. In terms of biological role, component of the mitochondrial ribosome (mitoribosome), a dedicated translation machinery responsible for the synthesis of mitochondrial genome-encoded proteins, including at least some of the essential transmembrane subunits of the mitochondrial respiratory chain. The mitoribosomes are attached to the mitochondrial inner membrane and translation products are cotranslationally integrated into the membrane. The polypeptide is Small ribosomal subunit protein uS13m (sws2) (Schizosaccharomyces pombe (strain 972 / ATCC 24843) (Fission yeast)).